A 731-amino-acid polypeptide reads, in one-letter code: Anaphase-promoting complex subunit 2 (731 aa).

It belongs to the cullin family. In terms of assembly, the APC/C is probably composed of at least 12 subunits: apc-2, apc-10, apc-11, cdc-26, emb-1, emb-27, emb-30, mat-1, mat-2, mat-3, such-1 and gfi-3.

It participates in protein modification; protein ubiquitination. Probable component of the anaphase promoting complex/cyclosome (APC/C), a cell cycle-regulated ubiquitin ligase that controls progression through mitosis and the G1 phase of the cell cycle. The APC/C complex acts by mediating ubiquitination and subsequent degradation of target proteins. Developmental role in early embryogenesis and the metaphase to anaphase transition in meiosis and mitosis. This is Anaphase-promoting complex subunit 2 from Caenorhabditis elegans.